A 1898-amino-acid polypeptide reads, in one-letter code: Receptor-type tyrosine-protein phosphatase F (1898 aa).

Residues 1–29 (MAPEPAPGRRMVPLVPALVMLGLMAGAHG) form the signal peptide. Topologically, residues 30-1254 (DSKPVFVKVP…QQQEEPEMLW (1225 aa)) are extracellular. Ig-like C2-type domains are found at residues 33–123 (PVFV…AKLS), 135–224 (PTID…ANLY), and 232–314 (PRFS…AQVT). Cys-54 and Cys-107 are disulfide-bonded. 68-77 (KKGKKVSSQR) is a heparin binding site. N-linked (GlcNAc...) asparagine glycosylation occurs at Asn-117. Cys-156 and Cys-207 are oxidised to a cystine. N-linked (GlcNAc...) asparagine glycans are attached at residues Asn-250 and Asn-295. A disulfide bridge connects residues Cys-253 and Cys-298. Fibronectin type-III domains follow at residues 321–411 (PPID…TGEQ), 416–510 (PPRR…TQQG), 514–604 (QPAD…TAQS), 609–706 (PPQK…TDED), 711–810 (PPRK…TTGA), 811–904 (VPGR…TPED), 909–1001 (FPQN…TMPV), and 1005–1089 (FAKN…TAPD). The disordered stretch occupies residues 693–712 (GPESSPVLVRTDEDVPSGPP). The N-linked (GlcNAc...) asparagine glycan is linked to Asn-721. Asn-941, Asn-957, and Asn-960 each carry an N-linked (GlcNAc...) asparagine glycan. The helical transmembrane segment at 1255–1275 (VTGPVLAVILIILIVIAILLF) threads the bilayer. At 1276–1898 (KRKRTHSPSS…YLGSFDHYAT (623 aa)) the chain is on the cytoplasmic side. Phosphoserine is present on Ser-1296. Tyrosine-protein phosphatase domains are found at residues 1343–1598 (FSQE…LLEA) and 1630–1889 (MELE…ALEY). Substrate contacts are provided by residues Asp-1507, 1539 to 1545 (CSAGVGR), and Gln-1583. The Phosphocysteine intermediate role is filled by Cys-1539. Cys-1830 functions as the Phosphocysteine intermediate in the catalytic mechanism.

Belongs to the protein-tyrosine phosphatase family. Receptor class 2A subfamily. Interacts with GRIP1. Interacts with PPFIA1, PPFIA2 and PPFIA3. Interacts with PTPRF. As to expression, expressed in the cell of the T lineage but not in cells of any other hemopoietic lineage.

Its subcellular location is the membrane. The enzyme catalyses O-phospho-L-tyrosyl-[protein] + H2O = L-tyrosyl-[protein] + phosphate. Functionally, possible cell adhesion receptor. It possesses an intrinsic protein tyrosine phosphatase activity (PTPase) and dephosphorylates EPHA2 regulating its activity. The chain is Receptor-type tyrosine-protein phosphatase F (Ptprf) from Mus musculus (Mouse).